The sequence spans 759 residues: MTQDKCPFKEQSSQPNFAGGGTSNKDWWPDRLKLNILRQHTAVSNPLDADFDYAAAFNSLDYEGLKKDLRALMTDSQDWWPADFGHYGGLFIRMAWHSAGTYRVFDGRGGAGQGQQRFAPLNSWPDNVSLDKARRLLWPIKQKYGNKISWADLLILTGNVALESMGFKTFGFAGGRPDTWEADEATYWGRETTWLGNDARYAKGFSGSDKRGSLIADEESHKTTHSRELETPLAAAHMGLIYVNPEGPDGNPDPVAAAHDIRDTFGRMAMNDEETVALIAGGHTFGKTHGAAPADNVGKEPEAAGLEAQGLGWANKHGSGKGPHTITSGLEVTWTKTPTQWNNNFLEYLFKFEWELTKSPAGAHQWVAKNADEIIPDAYDASKKHKPTMLTTDLSLRFDPAYEKIARRFLEHPDQFADAFARAWFKLTHRDMGPRARYLGPEVPSEVLIWQDPIPAVNHPLVDASDIAALKDEILASGVPPRSFISTAWAAASTFRGSDKRGGANGARIRLAPQRDWEVNNQPWLREALSALEAVQSRFNARGDSKKVSLADLIVLAGCAAVEKAAQDAGHPIKVPFVPGRMDASQEETDVQSFNHMEPFADGFRNFAKGPARPRAEHYLVDKAQLLNLSAPEMTVLVGGLRVLNTNYDGSTHGVFTSRPGALTNDFFVHLLDMNTAWKDVGNGELFEGSDRKTGGKKWTATRADLVFGSNAELRAIAEVYASNDGDMKFVKDFVAAWNKVMNLDRFDLKGKQTIPARL.

Residues 1 to 24 are disordered; sequence MTQDKCPFKEQSSQPNFAGGGTSN. The segment at residues 96-242 is a cross-link (tryptophyl-tyrosyl-methioninium (Trp-Tyr) (with M-268)); sequence WHSAGTYRVF…LAAAHMGLIY (147 aa). The active-site Proton acceptor is the histidine 97. A cross-link (tryptophyl-tyrosyl-methioninium (Tyr-Met) (with W-96)) is located at residues 242–268; that stretch reads YVNPEGPDGNPDPVAAAHDIRDTFGRM. Histidine 283 lines the heme b pocket.

The protein belongs to the peroxidase family. Peroxidase/catalase subfamily. As to quaternary structure, homodimer or homotetramer. Heme b is required as a cofactor. In terms of processing, formation of the three residue Trp-Tyr-Met cross-link is important for the catalase, but not the peroxidase activity of the enzyme.

It is found in the cytoplasm. The enzyme catalyses H2O2 + AH2 = A + 2 H2O. It carries out the reaction 2 H2O2 = O2 + 2 H2O. Its function is as follows. Bifunctional enzyme with both catalase and broad-spectrum peroxidase activity. The polypeptide is Catalase-peroxidase (Aspergillus fumigatus (strain CBS 144.89 / FGSC A1163 / CEA10) (Neosartorya fumigata)).